A 337-amino-acid polypeptide reads, in one-letter code: Glutaminase-asparaginase (337 aa).

An Asparaginase/glutaminase domain is found at 10-337; sequence ANVVILATGG…KELQRIFWEY (328 aa). T20 acts as the Acyl-ester intermediate in catalysis. Substrate is bound by residues S67 and 100-101; that span reads TD.

The protein belongs to the asparaginase 1 family. Homotetramer.

Its subcellular location is the periplasm. It catalyses the reaction L-glutamine + H2O = L-glutamate + NH4(+). The catalysed reaction is L-asparagine + H2O = L-aspartate + NH4(+). This chain is Glutaminase-asparaginase (ansB), found in Pseudomonas sp. (strain ATCC 29598 / 7A).